The chain runs to 179 residues: MQRLKSFYLETIIPKLKEEFGYVNSYRVPKLKKIVINRGFDESCQNSKILEVLLNELEIISGQKPIISKAKKAIANFKLKEKMPVGMFLTLRSEKMYSFLDRLINLSLPRIRDFQGINKNCFDGSGNFSFGLSEQSMFPEINFDKMIKVQGLNITIVTTAETNQEAFFLLKELGIPFRD.

This sequence belongs to the universal ribosomal protein uL5 family. Part of the 50S ribosomal subunit; contacts the 5S rRNA.

The protein resides in the plastid. It localises to the chloroplast. Functionally, binds 5S rRNA, forms part of the central protuberance of the 50S subunit. This chain is Large ribosomal subunit protein uL5c (rpl5), found in Euglena gracilis.